The sequence spans 166 residues: Small ribosomal subunit protein uS5 (166 aa).

The 64-residue stretch at 11-74 folds into the S5 DRBM domain; it reads LQEKLIAVNR…EKARRNMINV (64 aa).

The protein belongs to the universal ribosomal protein uS5 family. In terms of assembly, part of the 30S ribosomal subunit. Contacts proteins S4 and S8.

In terms of biological role, with S4 and S12 plays an important role in translational accuracy. Functionally, located at the back of the 30S subunit body where it stabilizes the conformation of the head with respect to the body. This Mannheimia succiniciproducens (strain KCTC 0769BP / MBEL55E) protein is Small ribosomal subunit protein uS5.